The chain runs to 359 residues: Cysteine/Cysteine sulfinic acid decarboxylase (359 aa).

This sequence in the N-terminal section; belongs to the HFCD (homo-oligomeric flavin containing Cys decarboxylase) superfamily. It in the C-terminal section; belongs to the PPC synthetase family.

The catalysed reaction is L-cysteine + H(+) = cysteamine + CO2. It catalyses the reaction 3-sulfino-L-alanine + H(+) = hypotaurine + CO2. Its activity is regulated as follows. Slightly stimulated in the presence of 1 mM Mg(2+). Catalyzes the decarboxylation of L-cysteine to cysteamine and of 3-sulfino-L-alanine (cysteine sulfinic acid) to hypotaurine. Also catalyzes the decarboxylation of various amino acids such as L-lysine, L-glutamate, L-asparaginate and L-proline. In vitro, shows highest activity with L-cysteine as substrate. This is Cysteine/Cysteine sulfinic acid decarboxylase from Unknown prokaryotic organism.